The primary structure comprises 258 residues: Thrombin-like enzyme saxthrombin (258 aa).

The first 18 residues, 1 to 18 (MVLIRVLANLLILQLSYA), serve as a signal peptide directing secretion. The propeptide occupies 19-24 (QKSSEL). Residues 25–249 (VIGGDECNIN…YNHWIQSIIA (225 aa)) form the Peptidase S1 domain. Intrachain disulfides connect cysteine 31–cysteine 163, cysteine 50–cysteine 66, cysteine 98–cysteine 256, cysteine 142–cysteine 210, cysteine 174–cysteine 189, and cysteine 200–cysteine 225. Residue asparagine 44 is glycosylated (N-linked (GlcNAc...) asparagine). Residues histidine 65 and aspartate 110 each act as charge relay system in the active site. Serine 204 functions as the Charge relay system in the catalytic mechanism. The N-linked (GlcNAc...) asparagine glycan is linked to asparagine 251.

This sequence belongs to the peptidase S1 family. Snake venom subfamily. As to quaternary structure, monomer. As to expression, expressed by the venom gland.

Its subcellular location is the secreted. In terms of biological role, thrombin-like snake venom serine protease that shows strong blood coagulation activity in vitro. The protein is Thrombin-like enzyme saxthrombin of Gloydius intermedius (Central Asian pit viper).